A 417-amino-acid polypeptide reads, in one-letter code: Histidine--tRNA ligase (417 aa).

Belongs to the class-II aminoacyl-tRNA synthetase family. Homodimer.

It is found in the cytoplasm. It catalyses the reaction tRNA(His) + L-histidine + ATP = L-histidyl-tRNA(His) + AMP + diphosphate + H(+). This Acetivibrio thermocellus (strain ATCC 27405 / DSM 1237 / JCM 9322 / NBRC 103400 / NCIMB 10682 / NRRL B-4536 / VPI 7372) (Clostridium thermocellum) protein is Histidine--tRNA ligase.